The chain runs to 525 residues: MASYFALVLNGISMVFSQGLFPLYTIPDHLGPWTPIDLSHLHCPNNLYTDASYCTTEQSITYTELKVGSSVSQKIPGFTCTGVRTESVTYTNFVGYVTTTFKKKHFPPKSRDCREAYERKKAGDPRYEESLAHPYPDNSWLRTVTTTKDSWVIIEPSVVELDIYTSALYSPLFKDGTCSKSRTYSPYCPTNHDFTIWMPESENIRSACNLFSTSRGKLVRNRTSTCGIIDERGLFRSVKGACKISICGRQGIRLVDGTWMSFRYSEYLPVCSPSQLINTHDIKVDELENAIVLDLIRRREECLDTLETILMSGSVSHRRLSHFRKLVPGSGKAYSYINGTLMESDAHYIKVENWSEVIPHKGCLMVGGKCYEPVNDVYFNGIIRDSNNQILIPEMQSSLLREHVDLLKANIVPFRHPMLLRSFTSDTEEDIVEFVNPHLQDTQKLVSDMDLGLSDWKRYLLIGSLAVGGVVAILFIGTCCLRCRAGRNRRTIRSNHRSLSHDVVFHKDKDKVITSWESYKGQTAQ.

An N-terminal signal peptide occupies residues 1-17; sequence MASYFALVLNGISMVFS. At 18-459 the chain is on the virion surface side; the sequence is QGLFPLYTIP…DLGLSDWKRY (442 aa). N-linked (GlcNAc...) asparagine; by host glycans are attached at residues Asn-221 and Asn-338. The helical transmembrane segment at 460–480 threads the bilayer; that stretch reads LLIGSLAVGGVVAILFIGTCC. A lipid anchor (S-palmitoyl cysteine; by host) is attached at Cys-480. Residues 481–525 are Intravirion-facing; it reads LRCRAGRNRRTIRSNHRSLSHDVVFHKDKDKVITSWESYKGQTAQ.

The protein belongs to the lyssavirus glycoprotein family. As to quaternary structure, homotrimer. Interacts with matrix protein. Post-translationally, glycosylated and palmitoylated by host. Glycosylation is crucial for glycoprotein export at the cell surface.

Its subcellular location is the virion membrane. Functionally, attaches the virus to host cellular receptor, inducing endocytosis of the virion. In the endosome, the acidic pH induces conformational changes in the glycoprotein trimer, which trigger fusion between virus and cell membrane. There is convincing in vitro evidence that the muscular form of the nicotinic acetylcholine receptor (nAChR), the neuronal cell adhesion molecule (NCAM), and the p75 neurotrophin receptor (p75NTR) bind glycoprotein and thereby facilitate rabies virus entry into cells. The polypeptide is Glycoprotein (G) (Miniopterus schreibersii (Schreibers's long-fingered bat)).